The following is a 418-amino-acid chain: MKATIVTVGDEILIGQIIDTNSSFIAKSLDKIGIGVHEMLSITDDKQHILQTLSLLQNKVDVVIITGGLGPTKDDITKKTLCEYFNDKLIINEKVLVHVTQLIEDYFKRPITQVNKDQALVPSKCEVLFNQVGTAPGMWLQKENTVFISLPGVPYEMKYLIENEVIPKLIAKYDRPFIIHKTILTYGVGESLLAERIETWEDNLPKFIKLAYLPSPGRVRLRLSARGVDENVLKNEISLQVQKLQLIISDCIVGFEEDETLEVVLGKLLTEKKLTISTAESCTGGKIASTITSVSGSSNYFKGSIVSYATEAKVAVLGISQEKINKFSVVSTQVAEEMATQVQKKFKTNFAIATTGNAGPNKGDANAEVGTVFIAIATPKGVFSEKFNFGQPREKVIDRALNQALEMIYKEILKNYSK.

This sequence belongs to the CinA family.

The protein is CinA-like protein of Flavobacterium psychrophilum (strain ATCC 49511 / DSM 21280 / CIP 103535 / JIP02/86).